We begin with the raw amino-acid sequence, 223 residues long: MLTLFKKGKPKGGSVDDRNSSYRESDPMLVWGTAPPAYLDVYHDERDKNELQFNTKSYLIQANLEVISSKPIERTTEMLKVLDVMVDEYDGSYLSKALIITSYLTIGTHLRRMMSSVKNNHKYNNGFTEVIEFTGTAEIHPRDQEIKYNKYLMTSHMGEPVSISYQFSGKKSKRRGKNILDAYNLELGNGSKPPDLKDLLESYEINLCYNLKGEHGFTNLVKS.

Basic residues predominate over residues 1 to 10 (MLTLFKKGKP). Positions 1–23 (MLTLFKKGKPKGGSVDDRNSSYR) are disordered. Positions 14–23 (SVDDRNSSYR) are enriched in basic and acidic residues.

Homomultimer. Interacts with nucleoprotein and with the cytoplasmic domain of glycoprotein.

Its subcellular location is the virion membrane. It localises to the host endomembrane system. Plays a major role in assembly and budding of virion. Completely covers the ribonucleoprotein coil and keep it in condensed bullet-shaped form. Inhibits viral transcription and stimulates replication. The polypeptide is Matrix protein (M) (Bos taurus (Bovine)).